Here is a 156-residue protein sequence, read N- to C-terminus: MEPTFNKMTAAGYHAIEQEIEDLKQQRPERIRILAAAAALGDRSENAEYSSAKRDLGRLESRLRYLNKQLQYAQIVQPADNDQLDIGKFVTIEFLDDHDQITYQLVGKQEANLEQQKISFTSPIGQALANHTVDDVVTVNAPNGAYQVKVIAVKRA.

The stretch at 43–74 forms a coiled coil; sequence RSENAEYSSAKRDLGRLESRLRYLNKQLQYAQ.

Belongs to the GreA/GreB family.

Functionally, necessary for efficient RNA polymerase transcription elongation past template-encoded arresting sites. The arresting sites in DNA have the property of trapping a certain fraction of elongating RNA polymerases that pass through, resulting in locked ternary complexes. Cleavage of the nascent transcript by cleavage factors such as GreA or GreB allows the resumption of elongation from the new 3'terminus. GreA releases sequences of 2 to 3 nucleotides. This Lactiplantibacillus plantarum (strain ATCC BAA-793 / NCIMB 8826 / WCFS1) (Lactobacillus plantarum) protein is Transcription elongation factor GreA 1.